The sequence spans 165 residues: Small ribosomal subunit protein uS17m (165 aa).

It belongs to the universal ribosomal protein uS17 family. Component of the mitochondrial small ribosomal subunit (mt-SSU). Mature N.crassa 74S mitochondrial ribosomes consist of a small (37S) and a large (54S) subunit. The 37S small subunit contains a 16S ribosomal RNA (16S mt-rRNA) and 32 different proteins. The 54S large subunit contains a 23S rRNA (23S mt-rRNA) and 42 different proteins. uS17m interacts with the F(1)-ATPase inhibitor IF(1) dimer.

It localises to the mitochondrion. Its function is as follows. Component of the mitochondrial ribosome (mitoribosome), a dedicated translation machinery responsible for the synthesis of mitochondrial genome-encoded proteins, including at least some of the essential transmembrane subunits of the mitochondrial respiratory chain. The mitoribosomes are attached to the mitochondrial inner membrane and translation products are cotranslationally integrated into the membrane. The sequence is that of Small ribosomal subunit protein uS17m (mrps17) from Neurospora crassa (strain ATCC 24698 / 74-OR23-1A / CBS 708.71 / DSM 1257 / FGSC 987).